The following is a 378-amino-acid chain: Erythronate-4-phosphate dehydrogenase (378 aa).

Residues S45 and T66 each coordinate substrate. The NAD(+) site is built by D146 and T175. R208 is a catalytic residue. Residue D232 coordinates NAD(+). E237 is an active-site residue. H254 acts as the Proton donor in catalysis. G257 contributes to the NAD(+) binding site. Y258 is a substrate binding site.

The protein belongs to the D-isomer specific 2-hydroxyacid dehydrogenase family. PdxB subfamily. In terms of assembly, homodimer.

The protein resides in the cytoplasm. It catalyses the reaction 4-phospho-D-erythronate + NAD(+) = (R)-3-hydroxy-2-oxo-4-phosphooxybutanoate + NADH + H(+). It participates in cofactor biosynthesis; pyridoxine 5'-phosphate biosynthesis; pyridoxine 5'-phosphate from D-erythrose 4-phosphate: step 2/5. Functionally, catalyzes the oxidation of erythronate-4-phosphate to 3-hydroxy-2-oxo-4-phosphonooxybutanoate. The protein is Erythronate-4-phosphate dehydrogenase of Salmonella paratyphi A (strain ATCC 9150 / SARB42).